The following is a 459-amino-acid chain: Cysteine--tRNA ligase (459 aa).

Zn(2+) is bound at residue Cys28. Residues 30 to 40 (VTVYDLCHIGH) carry the 'HIGH' region motif. Positions 209, 234, and 238 each coordinate Zn(2+). A 'KMSKS' region motif is present at residues 266 to 270 (KMSKS). Lys269 is a binding site for ATP.

The protein belongs to the class-I aminoacyl-tRNA synthetase family. Monomer. The cofactor is Zn(2+).

It is found in the cytoplasm. It carries out the reaction tRNA(Cys) + L-cysteine + ATP = L-cysteinyl-tRNA(Cys) + AMP + diphosphate. In Shewanella oneidensis (strain ATCC 700550 / JCM 31522 / CIP 106686 / LMG 19005 / NCIMB 14063 / MR-1), this protein is Cysteine--tRNA ligase.